The chain runs to 356 residues: Transcription factor MafB (356 aa).

2 disordered regions span residues 49–79 (RLQPQGSVSSTPISTPCSSVPSSPSFSPTEQ) and 140–240 (YRGA…LNVE). The span at 55–77 (SVSSTPISTPCSSVPSSPSFSPT) shows a compositional bias: low complexity. Basic residues-rich tracts occupy residues 183-196 (AHGHHPHHHHHHHH) and 212-223 (HHRHHHHHHPHG). Positions 270-295 (RLKQKRRTLKNRGYAQSCRFKRVQQK) are basic motif. A bZIP domain is found at 270-333 (RLKQKRRTLK…DAYKLKCEKL (64 aa)). The segment at 298–319 (LENEKTQLINQVEQLKQEINRL) is leucine-zipper.

It belongs to the bZIP family. Maf subfamily. In terms of assembly, homodimer or heterodimer with other bHLH-Zip transcription factors. Binds DNA as a homodimer or a heterodimer.

The protein localises to the nucleus. May act as a transcriptional activator or repressor. Involved in neurogenesis. Involved in the development of rhombomeres (r) 5 and 6 segments from their common precursor 'proto-segment' in the hindbrain. In Danio rerio (Zebrafish), this protein is Transcription factor MafB (mafb).